The chain runs to 326 residues: Beta-ketoacyl-[acyl-carrier-protein] synthase III (326 aa).

Catalysis depends on residues cysteine 112 and histidine 251. An ACP-binding region spans residues 252–256 (QANSR). The active site involves asparagine 281.

The protein belongs to the thiolase-like superfamily. FabH family. In terms of assembly, homodimer.

It is found in the cytoplasm. It carries out the reaction malonyl-[ACP] + acetyl-CoA + H(+) = 3-oxobutanoyl-[ACP] + CO2 + CoA. It functions in the pathway lipid metabolism; fatty acid biosynthesis. Catalyzes the condensation reaction of fatty acid synthesis by the addition to an acyl acceptor of two carbons from malonyl-ACP. Catalyzes the first condensation reaction which initiates fatty acid synthesis and may therefore play a role in governing the total rate of fatty acid production. Possesses both acetoacetyl-ACP synthase and acetyl transacylase activities. Its substrate specificity determines the biosynthesis of branched-chain and/or straight-chain of fatty acids. This is Beta-ketoacyl-[acyl-carrier-protein] synthase III from Clostridium botulinum (strain Kyoto / Type A2).